We begin with the raw amino-acid sequence, 83 residues long: Putative protein T-ENOL (83 aa).

A disordered region spans residues 1 to 33 (MASTPMGNEGEKKSSWPSQAAPSLRGGPASLSR).

This chain is Putative protein T-ENOL, found in Homo sapiens (Human).